A 269-amino-acid chain; its full sequence is Protein tio (269 aa).

A compositionally biased stretch (basic and acidic residues) spans 1–12 (MANEPQEHEEGK). The tract at residues 1–127 (MANEPQEHEE…NETKCPDEQN (127 aa)) is disordered. Over 1 to 246 (MANEPQEHEE…VEKKLTCVIC (246 aa)) the chain is Cytoplasmic. The span at 27 to 41 (PNIPQDPTPGTPPGP) shows a compositional bias: pro residues. Residues 61-74 (SEGPPDGSGNSSPP) show a composition bias toward low complexity. Composition is skewed to polar residues over residues 91–101 (SESGGNNSAPN) and 114–127 (AGNG…DEQN). Y136 bears the Phosphotyrosine; by host LCK mark. Positions 158 to 167 (EEERSPFNKY) are CSKH/LBD2. The SH3B/LBD1 stretch occupies residues 186–195 (IPPPQLPPRP). A helical membrane pass occupies residues 247-267 (LLIGILVLLILLFMLGFLFLL). Residues 268 to 269 (MK) lie on the Extracellular side of the membrane.

As to quaternary structure, homodimer. Binds SH3 domain of host LYN, HCK, LCK, SRC, FYN or YES. When tyrosine-phosphorylated, binds to the SH2 domain of host LCK, SRC, or FYN. Phosphorylated by host LCK, SRC and less efficiently by FYN.

It localises to the host cell membrane. Its function is as follows. Transforms host T-cells, inducing T-cell lymphomia in the host. Activates at least SRC and LCK tyrosines kinases, thereby activating signaling pathway transforming host T-cells. Human T-cells transformed ex vivo display a IL2 indenpendent growth phenotype. This Ateles (AtHV-3) protein is Protein tio.